Reading from the N-terminus, the 343-residue chain is Glucokinase (343 aa).

18-23 (GDIGGT) contributes to the ATP binding site.

The protein belongs to the bacterial glucokinase family.

The protein resides in the cytoplasm. It carries out the reaction D-glucose + ATP = D-glucose 6-phosphate + ADP + H(+). This Brucella suis biovar 1 (strain 1330) protein is Glucokinase.